The chain runs to 136 residues: Calmodulin-A (136 aa).

EF-hand domains lie at 1-36 (EQIA…LGQN), 37-72 (PTEA…KMKD), 74-109 (DSEE…LGEK), and 110-136 (LTDE…EEFV). 15 residues coordinate Ca(2+): Asp14, Asp16, Asp18, Thr20, Glu25, Asp50, Asp52, Asn54, Thr56, Glu61, Asp87, Asp89, Asn91, Tyr93, and Glu98. N6,N6,N6-trimethyllysine is present on Lys109. Residues Asp123, Asp125, Asp127, Gln129, and Glu134 each contribute to the Ca(2+) site.

This sequence belongs to the calmodulin family.

Calmodulin acts as part of a calcium signal transduction pathway by mediating the control of a large number of enzymes, ion channels, aquaporins and other proteins through calcium-binding. Calcium-binding is required for the activation of calmodulin. Among the enzymes to be stimulated by the calmodulin-calcium complex are a number of protein kinases, such as myosin light-chain kinases and calmodulin-dependent protein kinase type II (CaMK2), and phosphatases. This is Calmodulin-A (calm1) from Oryzias latipes (Japanese rice fish).